The primary structure comprises 310 residues: RING-H2 finger protein ATL60 (310 aa).

Residues 24-44 (VLLFSIVSIFTGILFLLLLHL) traverse the membrane as a helical segment. The RING-type; atypical zinc finger occupies 120-162 (CAVCLSDLVDGDKARVLPRCNHGFHVDCIDMWFQSHSTCPLCR). Disordered regions lie at residues 170–201 (DTTHGGSEGLPQNQNFESGHSTNQHNPSQDQS) and 240–260 (GNFAASYNDHQQESSSTRSQE). Residues 179–201 (LPQNQNFESGHSTNQHNPSQDQS) are compositionally biased toward polar residues.

Belongs to the RING-type zinc finger family. ATL subfamily.

Its subcellular location is the membrane. It carries out the reaction S-ubiquitinyl-[E2 ubiquitin-conjugating enzyme]-L-cysteine + [acceptor protein]-L-lysine = [E2 ubiquitin-conjugating enzyme]-L-cysteine + N(6)-ubiquitinyl-[acceptor protein]-L-lysine.. The protein operates within protein modification; protein ubiquitination. The chain is RING-H2 finger protein ATL60 (ATL60) from Arabidopsis thaliana (Mouse-ear cress).